The chain runs to 256 residues: Ubiquinone/menaquinone biosynthesis C-methyltransferase UbiE (256 aa).

Residues Thr79, Asp100, and 128-129 contribute to the S-adenosyl-L-methionine site; that span reads DA.

Belongs to the class I-like SAM-binding methyltransferase superfamily. MenG/UbiE family.

The catalysed reaction is a 2-demethylmenaquinol + S-adenosyl-L-methionine = a menaquinol + S-adenosyl-L-homocysteine + H(+). It catalyses the reaction a 2-methoxy-6-(all-trans-polyprenyl)benzene-1,4-diol + S-adenosyl-L-methionine = a 5-methoxy-2-methyl-3-(all-trans-polyprenyl)benzene-1,4-diol + S-adenosyl-L-homocysteine + H(+). It functions in the pathway quinol/quinone metabolism; menaquinone biosynthesis; menaquinol from 1,4-dihydroxy-2-naphthoate: step 2/2. Its pathway is cofactor biosynthesis; ubiquinone biosynthesis. Methyltransferase required for the conversion of demethylmenaquinol (DMKH2) to menaquinol (MKH2) and the conversion of 2-polyprenyl-6-methoxy-1,4-benzoquinol (DDMQH2) to 2-polyprenyl-3-methyl-6-methoxy-1,4-benzoquinol (DMQH2). This chain is Ubiquinone/menaquinone biosynthesis C-methyltransferase UbiE, found in Stutzerimonas stutzeri (strain A1501) (Pseudomonas stutzeri).